The chain runs to 907 residues: Sensor protein GacS (907 aa).

The next 3 helical transmembrane spans lie at 9–25, 84–101, and 159–178; these read ASLM…WMQL, VLAH…IGSG, and LFAS…TLAV. An HAMP domain is found at 182–234; sequence RTINGPMSQIKQAVSQLKDGNLETRLPPLGSRELDELASGINRMAATLQNAQE. The Histidine kinase domain occupies 281–502; that stretch reads NMSHEIRTPL…EFWISLKLPK (222 aa). The residue at position 284 (His-284) is a Phosphohistidine; by autocatalysis. The 120-residue stretch at 658-777 folds into the Response regulatory domain; the sequence is RVLCVDDNPA…QLAQVVLKWT (120 aa). Position 707 is a 4-aspartylphosphate (Asp-707). The HPt domain occupies 814 to 907; that stretch reads KADLAADMLA…RLEAEARVMA (94 aa). At His-853 the chain carries Phosphohistidine.

Activation requires a sequential transfer of a phosphate group from a His in the primary transmitter domain, to an Asp in the receiver domain and to a His in the secondary transmitter domain.

The protein localises to the cell inner membrane. It catalyses the reaction ATP + protein L-histidine = ADP + protein N-phospho-L-histidine.. Functionally, forms part of a two-component regulatory system GacA/GacS(LemA). May be involved in lesion formation, swarming and in the production of extracellular protease, syringomycin and N-acyl-L-homoserine lactone (acyl-HSL). Required for pathogenicity on bean. The chain is Sensor protein GacS (gacS) from Pseudomonas syringae pv. syringae.